A 161-amino-acid chain; its full sequence is Nucleotide-binding protein Pnec_0318 (161 aa).

This sequence belongs to the YajQ family.

Its function is as follows. Nucleotide-binding protein. This is Nucleotide-binding protein Pnec_0318 from Polynucleobacter necessarius subsp. necessarius (strain STIR1).